The chain runs to 397 residues: MGIKQCCYILYFTLALVALLQPVRSAEGVGEILPSVNETRSLQACEALNIIDKCWRGKADWENNRQALADCAQGFAKGTYGGKWGDVYTVTSNLDDDVANPKEGTLRFAAAQNRPLWIIFKNDMVINLNQELVVNSDKTIDGRGVKVEIINGGLTLMNVKNIIIHNINIHDVKVLPGGMIKSNDGPPILRQASDGDTINVAGSSQIWIDHCSLSKSFDGLVDVTLGSTHVTISNCKFTQQSKAILLGADDTHVQDKGMLATVAFNMFTDNVDQRMPRCRFGFFQVVNNNYDRWGTYAIGGSSAPTILCQGNRFLAPDDQIKKNVLARTGTGAAESMAWNWRSDKDLLENGAIFVTSGSDPVLTPVQSAGMIPAEPGEAAIKLTSSAGVFSCHPGAPC.

The signal sequence occupies residues 1–25 (MGIKQCCYILYFTLALVALLQPVRS). An N-linked (GlcNAc...) asparagine glycan is attached at Asn37. Cys54 and Cys71 are joined by a disulfide. Ca(2+) contacts are provided by Asp194, Asp218, and Asp222. Residue Arg274 is part of the active site.

It belongs to the polysaccharide lyase 1 family. Amb a subfamily. As to quaternary structure, monomer. Ca(2+) is required as a cofactor. In terms of processing, the N-terminus is blocked. Pollen and flowers.

It catalyses the reaction Eliminative cleavage of (1-&gt;4)-alpha-D-galacturonan to give oligosaccharides with 4-deoxy-alpha-D-galact-4-enuronosyl groups at their non-reducing ends.. It participates in glycan metabolism; pectin degradation; 2-dehydro-3-deoxy-D-gluconate from pectin: step 2/5. In terms of biological role, has pectate lyase activity. The sequence is that of Pectate lyase 2 from Ambrosia artemisiifolia (Common ragweed).